Reading from the N-terminus, the 236-residue chain is Lipoarabinomannan carrier protein LprG (236 aa).

Residues 1–26 (MRTPRRHCRRIAVLAAVSIAATVVAG) form the signal peptide. Cysteine 27 carries N-palmitoyl cysteine lipidation. Residue cysteine 27 is the site of S-diacylglycerol cysteine attachment.

This sequence belongs to the LppX/LprAFG lipoprotein family. Post-translationally, modified by Lgt on Cys-27 with an S-linked diacylglyceral, signal peptide is removed by LspA, Cys-27 is further modifed with a fatty acid on its amino group by Lnt yielding a triacylated protein.

The protein localises to the cell inner membrane. The protein resides in the secreted. It localises to the cell wall. Helps membrane protein Mb1445c (P55) transport triacylglycerides (TAG) across the inner cell membrane into the periplasm and probably ultimately to the outer membrane. Binds TAG in its hydrophobic cavity and transfers it between lipid bilayers. TAG probably regulates lipid metabolism and growth regulation and plays a structural role in the outer membrane. Binds di- and triacylated phosphatidyl-myo-inositol mannosides (PIMs), and glycolipid lipoglycan modulins lipoarabinomannan (LAM) and lipomannan (LM), facilitating their recognition by TLR2. Required for activity of drug efflux transporter Mb1445c. Required, probably with Mb1445c, for normal surface localization of LAM. Functionally, constitutes a host TLR2 agonist (toll-like receptor). The chain is Lipoarabinomannan carrier protein LprG from Mycobacterium bovis (strain ATCC BAA-935 / AF2122/97).